The sequence spans 263 residues: Proteasome subunit beta type-4 (263 aa).

Met-1 is subject to N-acetylmethionine. The propeptide occupies 1 to 44 (MEAFWESRTGHWAGGPAPGQFYRVPSTPSCLMDPMSAPARPITR). Ser-26 bears the Phosphoserine mark. Tyr-101 is subject to Phosphotyrosine.

It belongs to the peptidase T1B family. As to quaternary structure, the 26S proteasome consists of a 20S proteasome core and two 19S regulatory subunits. The 20S proteasome core is a barrel-shaped complex made of 28 subunits that are arranged in four stacked rings. The two outer rings are each formed by seven alpha subunits, and the two inner rings are formed by seven beta subunits. The proteolytic activity is exerted by three beta-subunits PSMB5, PSMB6 and PSMB7. Forms a ternary complex with SMAD1 and OAZ1 before PSMB4 is incorporated into the 20S proteasome. Interacts with PRPF19.

It localises to the cytoplasm. Its subcellular location is the nucleus. Its function is as follows. Non-catalytic component of the 20S core proteasome complex involved in the proteolytic degradation of most intracellular proteins. This complex plays numerous essential roles within the cell by associating with different regulatory particles. Associated with two 19S regulatory particles, forms the 26S proteasome and thus participates in the ATP-dependent degradation of ubiquitinated proteins. The 26S proteasome plays a key role in the maintenance of protein homeostasis by removing misfolded or damaged proteins that could impair cellular functions, and by removing proteins whose functions are no longer required. Associated with the PA200 or PA28, the 20S proteasome mediates ubiquitin-independent protein degradation. This type of proteolysis is required in several pathways including spermatogenesis (20S-PA200 complex) or generation of a subset of MHC class I-presented antigenic peptides (20S-PA28 complex). SMAD1/OAZ1/PSMB4 complex mediates the degradation of the CREBBP/EP300 repressor SNIP1. The polypeptide is Proteasome subunit beta type-4 (Psmb4) (Rattus norvegicus (Rat)).